Consider the following 206-residue polypeptide: Small ribosomal subunit protein uS4 (206 aa).

The S4 RNA-binding domain occupies 96–156 (GRLDNVVYRM…EKAKKQSRVK (61 aa)).

Belongs to the universal ribosomal protein uS4 family. Part of the 30S ribosomal subunit. Contacts protein S5. The interaction surface between S4 and S5 is involved in control of translational fidelity.

In terms of biological role, one of the primary rRNA binding proteins, it binds directly to 16S rRNA where it nucleates assembly of the body of the 30S subunit. With S5 and S12 plays an important role in translational accuracy. The polypeptide is Small ribosomal subunit protein uS4 (Cronobacter sakazakii (strain ATCC BAA-894) (Enterobacter sakazakii)).